Reading from the N-terminus, the 423-residue chain is G protein-activated inward rectifier potassium channel 2 (423 aa).

At Met-1–Trp-89 the chain is on the cytoplasmic side. 2 positions are modified to phosphoserine: Ser-16 and Ser-23. Residues Arg-90 to Ile-114 traverse the membrane as a helical segment. The Extracellular portion of the chain corresponds to Ala-115–Gly-138. The segment at residues Phe-139–Glu-150 is an intramembrane region (helical; Pore-forming). An intramembrane region (pore-forming) is located at residues Thr-151–Tyr-157. The Selectivity filter motif lies at Thr-152 to Tyr-157. The Extracellular segment spans residues Arg-158–Glu-166. Residues Gly-167 to Cys-188 traverse the membrane as a helical segment. The Cytoplasmic segment spans residues Met-189–Val-423. Residues Asn-390–Val-423 are disordered. The PDZ-binding motif lies at Glu-420 to Val-423.

It belongs to the inward rectifier-type potassium channel (TC 1.A.2.1) family. KCNJ6 subfamily. As to quaternary structure, associates with KCNJ3/GIRK1 or KCNJ5/GRIK4 to form a G-protein-activated heteromultimer pore-forming unit. The resulting inward current is much larger. Interacts (via PDZ-binding motif) with SNX27 (via PDZ domain); the interaction is required when endocytosed to prevent degradation in lysosomes and promote recycling to the plasma membrane.

Its subcellular location is the membrane. The catalysed reaction is K(+)(in) = K(+)(out). With respect to regulation, activated by phosphatidylinositol 4,5 biphosphate (PtdIns(4,5)P2). Its function is as follows. Inward rectifier potassium channels are characterized by a greater tendency to allow potassium to flow into the cell rather than out of it. Their voltage dependence is regulated by the concentration of extracellular potassium; as external potassium is raised, the voltage range of the channel opening shifts to more positive voltages. The inward rectification is mainly due to the blockage of outward current by internal magnesium. This potassium channel may be involved in the regulation of insulin secretion by glucose and/or neurotransmitters acting through G-protein-coupled receptors. The chain is G protein-activated inward rectifier potassium channel 2 (KCNJ6) from Pongo abelii (Sumatran orangutan).